Reading from the N-terminus, the 504-residue chain is Cytochrome P450 3A16 (504 aa).

Cys-443 lines the heme pocket.

The protein belongs to the cytochrome P450 family. Heme serves as cofactor.

It localises to the endoplasmic reticulum membrane. The protein localises to the microsome membrane. It carries out the reaction an organic molecule + reduced [NADPH--hemoprotein reductase] + O2 = an alcohol + oxidized [NADPH--hemoprotein reductase] + H2O + H(+). In terms of biological role, cytochromes P450 are a group of heme-thiolate monooxygenases. In liver microsomes, this enzyme is involved in an NADPH-dependent electron transport pathway. It oxidizes a variety of structurally unrelated compounds, including steroids, fatty acids, and xenobiotics. This is Cytochrome P450 3A16 (Cyp3a16) from Mus musculus (Mouse).